We begin with the raw amino-acid sequence, 481 residues long: GTPase Der (481 aa).

2 consecutive EngA-type G domains span residues 3–166 (PVVA…ESDF) and 194–367 (IKLA…MSAT). GTP-binding positions include 9 to 16 (GRPNVGKS), 56 to 60 (DTGGI), 118 to 121 (NKVD), 200 to 207 (GKPNVGKS), 247 to 251 (DTAGV), and 312 to 315 (NKWD). Residues 368–452 (KRINTALLTQ…PIKIEFREGN (85 aa)) form the KH-like domain.

Belongs to the TRAFAC class TrmE-Era-EngA-EngB-Septin-like GTPase superfamily. EngA (Der) GTPase family. Associates with the 50S ribosomal subunit.

Functionally, GTPase that plays an essential role in the late steps of ribosome biogenesis. This chain is GTPase Der, found in Alteromonas mediterranea (strain DSM 17117 / CIP 110805 / LMG 28347 / Deep ecotype).